Reading from the N-terminus, the 99-residue chain is Small ribosomal subunit protein eS24 (99 aa).

Belongs to the eukaryotic ribosomal protein eS24 family.

The protein is Small ribosomal subunit protein eS24 of Pyrococcus horikoshii (strain ATCC 700860 / DSM 12428 / JCM 9974 / NBRC 100139 / OT-3).